The sequence spans 122 residues: Large ribosomal subunit protein uL14c (122 aa).

It belongs to the universal ribosomal protein uL14 family. In terms of assembly, part of the 50S ribosomal subunit.

The protein resides in the plastid. It localises to the chloroplast. Binds to 23S rRNA. This is Large ribosomal subunit protein uL14c from Phaseolus vulgaris (Kidney bean).